Reading from the N-terminus, the 369-residue chain is 3-dehydroquinate synthase (369 aa).

Residues 75–80 (DGEEHK), 109–113 (GVIGD), 133–134 (TT), K146, K155, and 173–176 (TLKT) contribute to the NAD(+) site. Zn(2+) contacts are provided by E188, H251, and H268.

It belongs to the sugar phosphate cyclases superfamily. Dehydroquinate synthase family. Co(2+) is required as a cofactor. The cofactor is Zn(2+). It depends on NAD(+) as a cofactor.

The protein resides in the cytoplasm. The catalysed reaction is 7-phospho-2-dehydro-3-deoxy-D-arabino-heptonate = 3-dehydroquinate + phosphate. The protein operates within metabolic intermediate biosynthesis; chorismate biosynthesis; chorismate from D-erythrose 4-phosphate and phosphoenolpyruvate: step 2/7. In terms of biological role, catalyzes the conversion of 3-deoxy-D-arabino-heptulosonate 7-phosphate (DAHP) to dehydroquinate (DHQ). The protein is 3-dehydroquinate synthase of Legionella pneumophila (strain Lens).